A 315-amino-acid polypeptide reads, in one-letter code: Pantothenate synthetase (315 aa).

Residue 45 to 52 (MGALHEGH) participates in ATP binding. The active-site Proton donor is histidine 52. Glutamine 77 lines the (R)-pantoate pocket. Beta-alanine is bound at residue glutamine 77. Residue 163–166 (GEKD) participates in ATP binding. Residue glutamine 169 participates in (R)-pantoate binding. Residues valine 192 and 200-203 (MSSR) contribute to the ATP site.

This sequence belongs to the pantothenate synthetase family. Homodimer.

Its subcellular location is the cytoplasm. The catalysed reaction is (R)-pantoate + beta-alanine + ATP = (R)-pantothenate + AMP + diphosphate + H(+). It participates in cofactor biosynthesis; (R)-pantothenate biosynthesis; (R)-pantothenate from (R)-pantoate and beta-alanine: step 1/1. Its function is as follows. Catalyzes the condensation of pantoate with beta-alanine in an ATP-dependent reaction via a pantoyl-adenylate intermediate. The polypeptide is Pantothenate synthetase (Mycobacterium ulcerans (strain Agy99)).